Here is a 426-residue protein sequence, read N- to C-terminus: Glutamate-1-semialdehyde 2,1-aminomutase (426 aa).

Residue Lys-265 is modified to N6-(pyridoxal phosphate)lysine.

Belongs to the class-III pyridoxal-phosphate-dependent aminotransferase family. HemL subfamily. In terms of assembly, homodimer. Pyridoxal 5'-phosphate is required as a cofactor.

It localises to the cytoplasm. The catalysed reaction is (S)-4-amino-5-oxopentanoate = 5-aminolevulinate. It participates in porphyrin-containing compound metabolism; protoporphyrin-IX biosynthesis; 5-aminolevulinate from L-glutamyl-tRNA(Glu): step 2/2. The sequence is that of Glutamate-1-semialdehyde 2,1-aminomutase from Yersinia pseudotuberculosis serotype O:1b (strain IP 31758).